The sequence spans 311 residues: Coproporphyrin III ferrochelatase 1 (311 aa).

Fe-coproporphyrin III contacts are provided by residues tyrosine 12, arginine 29, 45–46, serine 53, and tyrosine 124; that span reads RY. Positions 182 and 263 each coordinate Fe(2+).

Belongs to the ferrochelatase family.

It localises to the cytoplasm. It catalyses the reaction Fe-coproporphyrin III + 2 H(+) = coproporphyrin III + Fe(2+). The protein operates within porphyrin-containing compound metabolism; protoheme biosynthesis. Its function is as follows. Involved in coproporphyrin-dependent heme b biosynthesis. Catalyzes the insertion of ferrous iron into coproporphyrin III to form Fe-coproporphyrin III. The protein is Coproporphyrin III ferrochelatase 1 of Bacillus cereus (strain ATCC 14579 / DSM 31 / CCUG 7414 / JCM 2152 / NBRC 15305 / NCIMB 9373 / NCTC 2599 / NRRL B-3711).